Reading from the N-terminus, the 322-residue chain is AETTAPSVYPLAPGTALKSNSMVTLGCLVKGYFPEPVTVTWNSGALSSGVHTFPAVLQSGLYTLTSSVTVPSSTWSSQAVTCNVAHPASSTKVDKKIVPRECNPCGCTGSEVSSVFIFPPKTKDVLTITLTPKVTCVVVDISQNDPEVRFSWFIDDVEVHTAQTHAPEKQSNSTLRSVSELPIVHRDWLNGKTFKCKVNSGAFPAPIEKSISKPEGTPRGPQVYTMAPPKEEMTQSQVSITCMVKGFYPPDIYTEWKMNGQPQENYKNTPPTMDTDGSYFLYSKLNVKKETWQQGNTFTCSVLHEGLHNHHTEKSLSHSPGK.

Ig-like domains lie at 6–98 (PSVY…KKIV), 115–212 (VFIF…KSIS), and 221–317 (PQVY…KSLS). Intrachain disulfides connect cysteine 27/cysteine 82, cysteine 136/cysteine 196, and cysteine 242/cysteine 300. N-linked (GlcNAc...) asparagine glycosylation is present at asparagine 172.

The polypeptide is Ig gamma-2A chain C region (Igg-2a) (Rattus norvegicus (Rat)).